The sequence spans 217 residues: Insulin-like growth factor 2.S (217 aa).

The first 56 residues, 1-56 (MEQLSCKHRSSSVEAEAQLCRQTESRSTQLPRMSVMRHLFLLSITFLVYTLDSAKA), serve as a signal peptide directing secretion. The interval 57–83 (YRATETLCGGELVDTLQFVCGDRGFYF) is b. 3 disulfides stabilise this stretch: Cys-64-Cys-103, Cys-76-Cys-116, and Cys-102-Cys-107. The interval 84 to 96 (STNNGRSNRRPNR) is c. The interval 97-117 (GIVDVCCFKSCDLELLETYCA) is a. A d region spans residues 118 to 123 (KPTKNE). Residues 124 to 217 (RDVSTAPATA…LQQASEPSHN (94 aa)) constitute a propeptide, e peptide.

The protein belongs to the insulin family.

The protein resides in the secreted. Functionally, the insulin-like growth factors, isolated from plasma, are structurally and functionally related to insulin but have a much higher growth-promoting activity. Promotes anterior neural development. Acts as a ligand for integrin which is required for IGF2 signaling. This is Insulin-like growth factor 2.S from Xenopus laevis (African clawed frog).